The following is a 560-amino-acid chain: Putative transport protein VIBHAR_02636 (560 aa).

A run of 5 helical transmembrane segments spans residues 8-28 (LLEQNPILLIFVVLAIGLAFG), 37-57 (LGNSIGVLITSLVMGHLGFSF), 66-86 (FMLFIYCVGIEAGPNFFGIFF), 91-111 (HYFILSMTVLVSAVGLTYFCS), and 164-184 (VGYAMAYLVGLISMIMFAKLL). 2 consecutive RCK C-terminal domains span residues 205 to 292 (LGNS…FRNG) and 293 to 376 (KEVF…KIGF). 6 helical membrane-spanning segments follow: residues 386–406 (LLAFCSFFILGIMFGLVTMTF), 409–429 (VSFSLGNAVGLLLSGITLGFL), 450–470 (LGLMFFMVGIGLSAGGKIFEH), 478–498 (IIGLAFIVSVVPVVLAYLVGA), 505–525 (SALLFGAIIGARTCAPAMDVV), and 539–559 (AGTYAIANILMTLAGTILIIL).

It belongs to the AAE transporter (TC 2.A.81) family. YbjL subfamily.

It localises to the cell membrane. This is Putative transport protein VIBHAR_02636 from Vibrio campbellii (strain ATCC BAA-1116).